A 450-amino-acid polypeptide reads, in one-letter code: UDP-N-acetylmuramoylalanine--D-glutamate ligase (450 aa).

An ATP-binding site is contributed by 119–125 (GSNGKTT).

This sequence belongs to the MurCDEF family.

It localises to the cytoplasm. The enzyme catalyses UDP-N-acetyl-alpha-D-muramoyl-L-alanine + D-glutamate + ATP = UDP-N-acetyl-alpha-D-muramoyl-L-alanyl-D-glutamate + ADP + phosphate + H(+). Its pathway is cell wall biogenesis; peptidoglycan biosynthesis. Its function is as follows. Cell wall formation. Catalyzes the addition of glutamate to the nucleotide precursor UDP-N-acetylmuramoyl-L-alanine (UMA). The chain is UDP-N-acetylmuramoylalanine--D-glutamate ligase from Streptococcus pneumoniae (strain P1031).